The primary structure comprises 248 residues: 2,3-bisphosphoglycerate-dependent phosphoglycerate mutase (248 aa).

Substrate-binding positions include 8-15 (RHGESTWN), 21-22 (TG), Arg60, 87-90 (ERHY), Lys98, 114-115 (RR), and 183-184 (GN). His9 acts as the Tele-phosphohistidine intermediate in catalysis. The Proton donor/acceptor role is filled by Glu87.

This sequence belongs to the phosphoglycerate mutase family. BPG-dependent PGAM subfamily. In terms of assembly, homodimer.

It carries out the reaction (2R)-2-phosphoglycerate = (2R)-3-phosphoglycerate. It participates in carbohydrate degradation; glycolysis; pyruvate from D-glyceraldehyde 3-phosphate: step 3/5. Catalyzes the interconversion of 2-phosphoglycerate and 3-phosphoglycerate. The chain is 2,3-bisphosphoglycerate-dependent phosphoglycerate mutase from Burkholderia ambifaria (strain ATCC BAA-244 / DSM 16087 / CCUG 44356 / LMG 19182 / AMMD) (Burkholderia cepacia (strain AMMD)).